The following is a 354-amino-acid chain: Chorismate synthase (354 aa).

Residue R48 participates in NADP(+) binding. FMN contacts are provided by residues 125 to 127, A280, 295 to 299, and R321; these read RAS and KPIPS.

The protein belongs to the chorismate synthase family. In terms of assembly, homotetramer. It depends on FMNH2 as a cofactor.

The enzyme catalyses 5-O-(1-carboxyvinyl)-3-phosphoshikimate = chorismate + phosphate. Its pathway is metabolic intermediate biosynthesis; chorismate biosynthesis; chorismate from D-erythrose 4-phosphate and phosphoenolpyruvate: step 7/7. Its function is as follows. Catalyzes the anti-1,4-elimination of the C-3 phosphate and the C-6 proR hydrogen from 5-enolpyruvylshikimate-3-phosphate (EPSP) to yield chorismate, which is the branch point compound that serves as the starting substrate for the three terminal pathways of aromatic amino acid biosynthesis. This reaction introduces a second double bond into the aromatic ring system. This chain is Chorismate synthase, found in Syntrophus aciditrophicus (strain SB).